The sequence spans 128 residues: Large ribosomal subunit protein uL22 (128 aa).

The protein belongs to the universal ribosomal protein uL22 family. In terms of assembly, part of the 50S ribosomal subunit.

Functionally, this protein binds specifically to 23S rRNA; its binding is stimulated by other ribosomal proteins, e.g. L4, L17, and L20. It is important during the early stages of 50S assembly. It makes multiple contacts with different domains of the 23S rRNA in the assembled 50S subunit and ribosome. The globular domain of the protein is located near the polypeptide exit tunnel on the outside of the subunit, while an extended beta-hairpin is found that lines the wall of the exit tunnel in the center of the 70S ribosome. This Nitrobacter winogradskyi (strain ATCC 25391 / DSM 10237 / CIP 104748 / NCIMB 11846 / Nb-255) protein is Large ribosomal subunit protein uL22.